Here is a 574-residue protein sequence, read N- to C-terminus: Squalene monooxygenase (574 aa).

Residues 1–20 (MWTFLGIATFTYFYKKFGDF) lie on the Cytoplasmic side of the membrane. The interaction with MARCHF6 stretch occupies residues 1-100 (MWTFLGIATF…EQLEARRRRK (100 aa)). An intramembrane segment occupies 21-41 (ITLANREVLLCVLVFLSLGLV). The Cytoplasmic portion of the chain corresponds to 42 to 574 (LSYRCRHRNG…IYSEMKYMVH (533 aa)). The segment at 62-73 (QFALFSDILSGL) is required for degradation in response to high membrane cholesterol levels. Residues 118 to 574 (TSSQNDPEVI…IYSEMKYMVH (457 aa)) form a sufficient for enzyme activity region. Residues 133 to 134 (VL), 153 to 154 (ER), Arg-161, Phe-166, Arg-234, Val-250, Asp-408, and Met-421 each bind FAD. The interval 516–574 (PLVLIGHFFAVAIYAVYFCFKSEPWITKPRALLSSGAVLYKACSVIFPLIYSEMKYMVH) is hydrophobic; mediates interaction with membranes.

This sequence belongs to the squalene monooxygenase family. Interacts (via N-terminal domain) with MARCHF6. Interacts with SMIM22; this interaction modulates lipid droplet formation. FAD is required as a cofactor. Post-translationally, ubiquitinated by MARCHF6 in response to high cholesterol levels in intracellular membranes, leading to proteasomal degradation. Detected in liver (at protein level).

The protein resides in the microsome membrane. Its subcellular location is the endoplasmic reticulum membrane. The catalysed reaction is squalene + reduced [NADPH--hemoprotein reductase] + O2 = (S)-2,3-epoxysqualene + oxidized [NADPH--hemoprotein reductase] + H2O + H(+). It functions in the pathway terpene metabolism; lanosterol biosynthesis; lanosterol from farnesyl diphosphate: step 2/3. Its activity is regulated as follows. Inhibited by NB-598 ((E)N-ethyl-N-(6,6-dimethyl-2-hepten-4-ynyl)-3-[(3,3'-bi-thiophen-5-yl)methoxy]benzene-methanamine). Contrary to fungal enzymes, the mammalian enzyme is only slightly inhibited by terbinafine. Inhibited by tellurite, tellurium dioxide, selenite, and selenium dioxide. In terms of biological role, catalyzes the stereospecific oxidation of squalene to (S)-2,3-epoxysqualene, and is considered to be a rate-limiting enzyme in steroid biosynthesis. The chain is Squalene monooxygenase (SQLE) from Homo sapiens (Human).